Reading from the N-terminus, the 75-residue chain is Large ribosomal subunit protein bL31c (75 aa).

This sequence belongs to the bacterial ribosomal protein bL31 family. Type A subfamily. As to quaternary structure, part of the 50S ribosomal subunit.

It is found in the plastid. It localises to the chloroplast. In terms of biological role, binds the 23S rRNA. In Cyanidium caldarium (Red alga), this protein is Large ribosomal subunit protein bL31c.